Here is a 129-residue protein sequence, read N- to C-terminus: ALK and LTK ligand 1 (129 aa).

The first 27 residues, 1–27 (MRPLKPGAPLPALFLLALALSPHGAHG), serve as a signal peptide directing secretion. Residues 24 to 63 (GAHGRPRGRRGARVTDKEPKPLLFLPAAGAGRTPSGSRSA) are disordered. Basic residues predominate over residues 25-35 (AHGRPRGRRGA). Intrachain disulfides connect Cys90/Cys126 and Cys104/Cys113.

This sequence belongs to the ALKAL family. In terms of tissue distribution, widely expressed with highest levels in thyroid and moderate levels in stomach, trachea, small intestine, prostate and brain.

It localises to the secreted. The protein resides in the cell membrane. Its function is as follows. Cytokine that acts as a physiological ligand for receptor tyrosine kinase LTK, leading to its activation. Monomeric ALKAL1 binds to LTK, leading to LTK homodimerization and activation. In contrast to ALKAL2, does not act as a potent physiological ligand for ALK. The sequence is that of ALK and LTK ligand 1 from Homo sapiens (Human).